The following is a 27-amino-acid chain: Paragonial peptide PS-1 (27 aa).

Low complexity predominate over residues 1–17 (DVPSANANANNQRTAAA). Residues 1–27 (DVPSANANANNQRTAAAKPQANAEASS) are disordered.

Main cells of the accessory glands of males (paragonial gland).

The protein localises to the secreted. In terms of biological role, represses female sexual receptivity and stimulates oviposition. This peptide has a low activity. The protein is Paragonial peptide PS-1 (PapC) of Drosophila funebris (Fruit fly).